A 446-amino-acid polypeptide reads, in one-letter code: Transcription factor Dp-2 (446 aa).

Position 2 is an N-acetylthreonine (threonine 2). Residues serine 24 and serine 42 each carry the phosphoserine; by CDK2 modification. Residues 60–82 (PQMIISTPQRIANSGSVLIGNPY) form an interaction with CEBPA region. Positions 103–118 (SDRKRAREFIDSDFSE) match the Nuclear localization signal motif. Serine 122 carries the phosphoserine modification. Residues 129 to 210 (GKGLRHFSMK…PTGKKRNQVD (82 aa)) mediate DNA binding. The short motif at 176–210 (DQENIRRRVYDALNVLMAMNIISSLPTGKKRNQVD) is the DEF box element. Residues 219-292 (NLEIEKQRRI…RKTVIDCSIS (74 aa)) form a dimerization region. Residues 229–261 (ERIKQKRAQLQELLLQQIAFKNLVQRNRQNEQQ) form a DCB1 region. The DCB2 stretch occupies residues 274-330 (LPFIIINTSRKTVIDCSISSDKFEYLFNFDNTFEIHDDIEVLKRMGMSFGLESGKCS). A disordered region spans residues 404 to 446 (LPASNSHQSSSAASHFSESRGETPCSFNDEDEEDEEEDPSSPE). Low complexity predominate over residues 406 to 419 (ASNSHQSSSAASHF). Residues 431 to 446 (NDEDEEDEEEDPSSPE) show a composition bias toward acidic residues.

This sequence belongs to the E2F/DP family. In terms of assembly, component of the DRTF1/E2F transcription factor complex. Forms heterodimers with E2F family members. The complex can interact with hypophosphorylated retinoblastoma protein RB1 and related proteins (RBL1 and RBL2) that inhibit the E2F transactivation domain. During the cell cycle, RB becomes phosphorylated in mid-to-late G1 phase, detaches from the DRTF1/E2F complex rendering E2F transcriptionally active. Interacts with GMCL. Component of the DREAM complex (also named LINC complex) at least composed of E2F4, E2F5, LIN9, LIN37, LIN52, LIN54, MYBL1, MYBL2, RBL1, RBL2, RBBP4, TFDP1 and TFDP2. The complex exists in quiescent cells where it represses cell cycle-dependent genes. It dissociates in S phase when LIN9, LIN37, LIN52 and LIN54 form a subcomplex that binds to MYBL2. The complex TFDP2:E2F1 interacts with CEBPA; the interaction prevents CEBPA binding to target gene promoters and represses its transcriptional activity. Post-translationally, phosphorylation by E2F1-bound cyclin A-CDK2, in the S phase, inhibits E2F-mediated DNA binding and transactivation. As to expression, expressed in all tissues examined. Highest levels in spleen and heart.

Its subcellular location is the nucleus. Functionally, can stimulate E2F-dependent transcription. Binds DNA cooperatively with E2F family members through the E2 recognition site, 5'-TTTC[CG]CGC-3', found in the promoter region of a number of genes whose products are involved in cell cycle regulation or in DNA replication. The TFDP2:E2F complex functions in the control of cell-cycle progression from G1 to S phase. The E2F1:DP complex appears to mediate both cell proliferation and apoptosis. Blocks adipocyte differentiation by repressing CEBPA binding to its target gene promoters. In Mus musculus (Mouse), this protein is Transcription factor Dp-2 (Tfdp2).